We begin with the raw amino-acid sequence, 542 residues long: Chondroitin sulfate N-acetylgalactosaminyltransferase 2 (542 aa).

The Cytoplasmic segment spans residues 1-13 (MSRRGSILHSRTQ). Residues 14-34 (WLLLGLALLFSLVLFMYLLEC) traverse the membrane as a helical; Signal-anchor for type II membrane protein segment. Residues 35 to 542 (APQTDGNASL…AYRTNSETAG (508 aa)) lie on the Lumenal side of the membrane. N-linked (GlcNAc...) asparagine glycosylation is present at Asn-41. A coiled-coil region spans residues 59–105 (ALLQEQEEHYQTRATSLKRQIAQLKQELQDMSEKMRALQERKKLGAN). A glycan (N-linked (GlcNAc...) asparagine) is linked at Asn-333. A divalent metal cation is bound by residues Asp-369 and His-486.

It belongs to the chondroitin N-acetylgalactosaminyltransferase family.

It localises to the golgi apparatus. It is found in the golgi stack membrane. The enzyme catalyses 3-O-(beta-D-GlcA-(1-&gt;3)-beta-D-Gal-(1-&gt;3)-beta-D-Gal-(1-&gt;4)-beta-D-Xyl)-L-seryl-[protein] + UDP-N-acetyl-alpha-D-galactosamine = 3-O-(beta-D-GalNAc-(1-&gt;4)-beta-D-GlcA-(1-&gt;3)-beta-D-Gal-(1-&gt;3)-beta-D-Gal-(1-&gt;4)-beta-D-Xyl)-L-seryl-[protein] + UDP + H(+). Its function is as follows. Transfers 1,4-N-acetylgalactosamine (GalNAc) from UDP-GalNAc to the non-reducing end of glucuronic acid (GlcUA). Required for addition of the first GalNAc to the core tetrasaccharide linker and for elongation of chondroitin chains. The protein is Chondroitin sulfate N-acetylgalactosaminyltransferase 2 (Csgalnact2) of Mus musculus (Mouse).